The primary structure comprises 215 residues: Cytochrome b6 (215 aa).

Residues 32–52 traverse the membrane as a helical segment; sequence IFYCLGGITLTCFLVQVATGF. A heme c-binding site is contributed by cysteine 35. Heme b-binding residues include histidine 86 and histidine 100. A run of 3 helical transmembrane segments spans residues 90–110, 116–136, and 186–206; these read ASMM…TGGF, LTWV…VTGY, and LHTF…FLMI. Positions 187 and 202 each coordinate heme b.

The protein belongs to the cytochrome b family. PetB subfamily. As to quaternary structure, the 4 large subunits of the cytochrome b6-f complex are cytochrome b6, subunit IV (17 kDa polypeptide, PetD), cytochrome f and the Rieske protein, while the 4 small subunits are PetG, PetL, PetM and PetN. The complex functions as a dimer. It depends on heme b as a cofactor. Requires heme c as cofactor.

The protein resides in the plastid. Its subcellular location is the chloroplast thylakoid membrane. In terms of biological role, component of the cytochrome b6-f complex, which mediates electron transfer between photosystem II (PSII) and photosystem I (PSI), cyclic electron flow around PSI, and state transitions. The sequence is that of Cytochrome b6 from Klebsormidium bilatum (Filamentous green alga).